The following is a 235-amino-acid chain: MPVYRLAAEHNAFPPAEGANEDGLVAVGGDLSPQRLLAAYRSGIFPWYSAGEPLLWWSLDPRLVLRPPALHVPRSLKKAIRQGAFRITFDHVFEQVMHQCGAVRAAEGTWITPEMEQAYLRLHQMGFAHSCESWLMDENHRYQLAGGIYGVAIGGAFFGESMFYRQPNASKVALVALVGHLAQQGYSLMDCQMTTQHMLRFGAVEMPRSVFLEDLQQAIAQPIPAGLWQTVSPLI.

It belongs to the L/F-transferase family.

It localises to the cytoplasm. It catalyses the reaction N-terminal L-lysyl-[protein] + L-leucyl-tRNA(Leu) = N-terminal L-leucyl-L-lysyl-[protein] + tRNA(Leu) + H(+). The enzyme catalyses N-terminal L-arginyl-[protein] + L-leucyl-tRNA(Leu) = N-terminal L-leucyl-L-arginyl-[protein] + tRNA(Leu) + H(+). It carries out the reaction L-phenylalanyl-tRNA(Phe) + an N-terminal L-alpha-aminoacyl-[protein] = an N-terminal L-phenylalanyl-L-alpha-aminoacyl-[protein] + tRNA(Phe). Functionally, functions in the N-end rule pathway of protein degradation where it conjugates Leu, Phe and, less efficiently, Met from aminoacyl-tRNAs to the N-termini of proteins containing an N-terminal arginine or lysine. The chain is Leucyl/phenylalanyl-tRNA--protein transferase from Magnetococcus marinus (strain ATCC BAA-1437 / JCM 17883 / MC-1).